Reading from the N-terminus, the 3117-residue chain is Centrosome-associated protein 350 (3117 aa).

Residues 1–24 (MRSSKSKEVPLPNPRNSQSKDTVQ) form a disordered region. The segment covering 14–24 (PRNSQSKDTVQ) has biased composition (polar residues). A phosphoserine mark is found at S86, S139, S142, and S218. Disordered stretches follow at residues 249-275 (PKAL…ILKR), 436-514 (ILGP…NKQE), 548-625 (TVEL…TEQK), and 671-722 (LEEP…PPQP). The segment covering 255–267 (TDSSPSSTSTSNS) has biased composition (low complexity). Basic and acidic residues predominate over residues 469 to 501 (GRAESDPRLDVLHRHLQRNSERSRSKSRSENNI). S473 and S507 each carry phosphoserine. Residues 563–573 (PRSHSPVKRKP) show a composition bias toward basic residues. 2 stretches are compositionally biased toward basic and acidic residues: residues 591–625 (YDTD…TEQK) and 694–703 (ESDKENKVQE). Positions 598–645 (QYIVRQQEERKRKQNEEKKAQKEATEQKNKRLQELYRKQKEAFTKVKN) form a coiled coil. At S695 the chain carries Phosphoserine. The segment covering 705–718 (PPSASSSSDMSLSE) has biased composition (low complexity). Residue T878 is modified to Phosphothreonine. S939 carries the phosphoserine modification. Over residues 981–992 (SVSEGPLLSEGS) the composition is skewed to low complexity. The tract at residues 981–1002 (SVSEGPLLSEGSLSEEEGDQDG) is disordered. Position 1061 is a phosphoserine (S1061). The interval 1081 to 1298 (EDKLDRGTST…GFKPNAPLTD (218 aa)) is disordered. A compositionally biased stretch (polar residues) spans 1087-1102 (GTSTSRPLNATATPLS). The segment covering 1135 to 1144 (QEDHSNRKSA) has biased composition (basic and acidic residues). 2 stretches are compositionally biased toward low complexity: residues 1153–1172 (TSQH…STSS) and 1251–1267 (QKTP…KSLQ). T1253 is subject to Phosphothreonine. S1256 and S1259 each carry phosphoserine. Positions 1272-1283 (GTSSERSKSSVM) are enriched in polar residues. Residues 1369–1411 (IKAQQQRHERDLALLKLKAEQEALESQRQLEETRNKAAQVHAE) adopt a coiled-coil conformation. Disordered stretches follow at residues 1494–1674 (TRTE…GGQD) and 1794–1854 (KLKS…SRMD). Polar residues predominate over residues 1503–1512 (PSVSLSQSKE). 2 stretches are compositionally biased toward low complexity: residues 1522 to 1535 (YSAS…SSGY) and 1543 to 1556 (SSGS…SVPS). Residues 1558–1571 (KENEKKLNGEKIES) show a composition bias toward basic and acidic residues. The residue at position 1613 (S1613) is a Phosphoserine. Residues 1631-1647 (ESHRRFNMEKRRGHHDD) show a composition bias toward basic and acidic residues. Residues S1648 and S1653 each carry the phosphoserine modification. Residues 1707 to 1800 (KALKEKTKAE…LQEKLKSAGE (94 aa)) are a coiled coil. Basic and acidic residues predominate over residues 1794–1815 (KLKSAGESKLDSHSDDDTKDNK). A Phosphoserine modification is found at S1818. Over residues 1827-1841 (RSPSPISISSSETSS) the composition is skewed to low complexity. A coiled-coil region spans residues 1856 to 1899 (KFLTKREQKLMQRRQHAEELLEWKRRLDAEEAEIRQMEKQALAA). Residues 1903-1925 (ELIKPKTPKKELEDQRTEQKEIA) show a composition bias toward basic and acidic residues. Disordered stretches follow at residues 1903-2020 (ELIK…QCHL), 2107-2221 (ELSQ…ESGD), 2329-2356 (LKER…QKNT), and 2407-2432 (KDSQ…FGSN). S1936 is modified (phosphoserine). The segment covering 1983 to 2005 (ELESSTSPSKHSLPKSCTSVSKQ) has biased composition (polar residues). Residues 2051–2110 (EGRIRALKDELRKRKSVVNQLKKEQKKRQKERLKAQEASLIKQLESYDEFIKKTEAELSQ) adopt a coiled-coil conformation. Over residues 2111-2129 (DLETSPTAKPQIKTLSSAS) the composition is skewed to polar residues. Phosphoserine is present on S2115. Residues 2141 to 2170 (HRSETAKNWKSLTESERSRGSLESIAEHVD) show a composition bias toward basic and acidic residues. A compositionally biased stretch (polar residues) spans 2173–2184 (LSGSERSVSERS). Residues 2191–2201 (RVNEWDSRTED) show a composition bias toward basic and acidic residues. Phosphothreonine is present on T2204. Position 2206 is a phosphoserine (S2206). Composition is skewed to basic and acidic residues over residues 2329–2338 (LKERQSDQDM) and 2407–2417 (KDSQSCRDKPQ). Polar residues predominate over residues 2419–2432 (MRSSTSGATSFGSN). A phosphoserine mark is found at S2431 and S2460. Over residues 2465–2478 (MKSKERSDVEHEQQ) the composition is skewed to basic and acidic residues. Positions 2465–2485 (MKSKERSDVEHEQQVTESPSL) are disordered. The region spanning 2517 to 2559 (GETSFAKGFWAGVELDKPEGNNNGTYDGIAYFECKEKHGIFAP) is the CAP-Gly domain. A Phosphothreonine modification is found at T2689. Residues 2719-2752 (LLDLLTREKNQLEAQLKSSLNEEKKSKQQLEKIS) adopt a coiled-coil conformation. Residues S2830 and S2839 each carry the phosphoserine modification.

In terms of assembly, part of a ternary complex that contains CEP350, CEP43 and MAPRE1. Interacts (via C-terminus) directly with CEP43 (via N-terminus). Interacts with NR1H3, PPARA, PPARD and PPARG. Interacts directly with microtubules. Interacts with the fusion protein CEP43-FGFR1, and by doing so recruits and activates PI3K and PLC-gamma. Interacts with CYLD. Interacts with CFAP157. Interacts with CEP19 (via C-terminus). Interacts with CEP78; promoting CEP78 localization to centrosome and centriole. In terms of processing, phosphorylated during mitosis. Detected in heart, brain, skeletal muscle, testis, placenta, lung, liver, kidney and pancreas.

Its subcellular location is the cytoplasm. The protein resides in the cytoskeleton. It localises to the microtubule organizing center. The protein localises to the centrosome. It is found in the spindle. Its subcellular location is the nucleus. The protein resides in the centriole. It localises to the cilium basal body. Functionally, plays an essential role in centriole growth by stabilizing a procentriolar seed composed of at least, SASS6 and CPAP. Required for anchoring microtubules to the centrosomes and for the integrity of the microtubule network. Recruits PPARA to discrete subcellular compartments and thereby modulates PPARA activity. Required for ciliation. The protein is Centrosome-associated protein 350 of Homo sapiens (Human).